We begin with the raw amino-acid sequence, 89 residues long: MKKTTRSKYRQEFSGDHVFDYKDPASLTRFIGDGGKITPSRISKLSVAQQKRVAAAVKKSRNLALLPSGSDSYDTFHRAEAISPVPFEI.

The protein belongs to the bacterial ribosomal protein bS18 family. Part of the 30S ribosomal subunit. Forms a tight heterodimer with protein bS6.

Its function is as follows. Binds as a heterodimer with protein bS6 to the central domain of the 16S rRNA, where it helps stabilize the platform of the 30S subunit. The protein is Small ribosomal subunit protein bS18 of Bdellovibrio bacteriovorus (strain ATCC 15356 / DSM 50701 / NCIMB 9529 / HD100).